The primary structure comprises 145 residues: Ribosome maturation factor RimP (145 aa).

This sequence belongs to the RimP family.

It is found in the cytoplasm. Its function is as follows. Required for maturation of 30S ribosomal subunits. This Borrelia garinii subsp. bavariensis (strain ATCC BAA-2496 / DSM 23469 / PBi) (Borreliella bavariensis) protein is Ribosome maturation factor RimP.